Reading from the N-terminus, the 158-residue chain is uncharacterized protein (158 aa).

The signal sequence occupies residues 1 to 22 (MKKIPNKLLAVSAFLTITTTYA). Residues 120-140 (LTGIIEYDTKFENHYETLVEA) traverse the membrane as a helical segment.

Its subcellular location is the cell membrane. This is an uncharacterized protein from Bacillus cereus.